The sequence spans 407 residues: Putative F-box protein At2g16220 (407 aa).

Positions 1-45 (MNSHFLTNDLILEVLSRLPLKSVARFHCVSKRWASMFGSPYFKEL) constitute an F-box domain. Residues 385 to 407 (PPSVQPEYDESDSESEEDREIII) are disordered. Acidic residues predominate over residues 391-407 (EYDESDSESEEDREIII).

The protein is Putative F-box protein At2g16220 of Arabidopsis thaliana (Mouse-ear cress).